A 473-amino-acid polypeptide reads, in one-letter code: Trehalose-6-phosphate synthase (473 aa).

Arginine 10 provides a ligand contact to D-glucose 6-phosphate. Residue 21 to 22 (GG) coordinates UDP-alpha-D-glucose. Tyrosine 76 and aspartate 130 together coordinate D-glucose 6-phosphate. Residues arginine 262 and lysine 267 each coordinate UDP-alpha-D-glucose. D-glucose 6-phosphate is bound at residue arginine 300. UDP-alpha-D-glucose contacts are provided by residues phenylalanine 339 and 365-369 (LVAKE). The disordered stretch occupies residues 454–473 (TPRSPERQQQNNVATFPKLA).

The protein belongs to the glycosyltransferase 20 family. As to quaternary structure, homotetramer.

It carries out the reaction D-glucose 6-phosphate + UDP-alpha-D-glucose = alpha,alpha-trehalose 6-phosphate + UDP + H(+). It participates in glycan biosynthesis; trehalose biosynthesis. Probably involved in the osmoprotection via the biosynthesis of trehalose. Catalyzes the transfer of glucose from UDP-alpha-D-glucose (UDP-Glc) to D-glucose 6-phosphate (Glc-6-P) to form trehalose-6-phosphate. Acts with retention of the anomeric configuration of the UDP-sugar donor. This is Trehalose-6-phosphate synthase from Salmonella paratyphi A (strain ATCC 9150 / SARB42).